Consider the following 684-residue polypeptide: Probable Xaa-Pro aminopeptidase P (684 aa).

Mn(2+) is bound by residues Asp481, Asp492, Glu590, and Glu604.

The protein belongs to the peptidase M24B family. Requires Mn(2+) as cofactor.

The enzyme catalyses Release of any N-terminal amino acid, including proline, that is linked to proline, even from a dipeptide or tripeptide.. In terms of biological role, catalyzes the removal of a penultimate prolyl residue from the N-termini of peptides. In Neurospora crassa (strain ATCC 24698 / 74-OR23-1A / CBS 708.71 / DSM 1257 / FGSC 987), this protein is Probable Xaa-Pro aminopeptidase P (ampp).